Consider the following 352-residue polypeptide: Protein RecA (352 aa).

67–74 is a binding site for ATP; that stretch reads GPESSGKT.

It belongs to the RecA family.

It localises to the cytoplasm. Can catalyze the hydrolysis of ATP in the presence of single-stranded DNA, the ATP-dependent uptake of single-stranded DNA by duplex DNA, and the ATP-dependent hybridization of homologous single-stranded DNAs. It interacts with LexA causing its activation and leading to its autocatalytic cleavage. The protein is Protein RecA of Chlamydia trachomatis serovar L2 (strain ATCC VR-902B / DSM 19102 / 434/Bu).